Consider the following 289-residue polypeptide: uncharacterized protein (289 aa).

Positions 268–289 (SDDGYETQWSDGPYSIPSGLSD) are disordered.

This is an uncharacterized protein from Zea mays (Maize).